The chain runs to 1592 residues: ABC transporter ATP-binding protein/permease VMR1 (1592 aa).

Residues 1–33 (MGTDPLIIRNNGSFWEVDDFTRLGRTQLLSYYL) lie on the Vacuolar side of the membrane. N-linked (GlcNAc...) asparagine glycosylation is present at asparagine 11. The helical transmembrane segment at 34 to 54 (PLAIIASIGIFALCRSGLSRY) threads the bilayer. Topologically, residues 55–74 (VRSAECDLVNEYLFGAQEER) are cytoplasmic. Residues 75–95 (KEDNSIERLLRNSNTQANYVN) form a helical membrane-spanning segment. Residues 96 to 100 (VKKQG) are Vacuolar-facing. The helical transmembrane segment at 101–121 (RILKLRHFDITTIDVKQIDAK) threads the bilayer. Residues 122-131 (NHGGLTFSRP) are Cytoplasmic-facing. Residues 132-152 (STSDHLRKSSEIVLMSLQIIG) traverse the membrane as a helical segment. The Vacuolar segment spans residues 153 to 170 (LSFLRVTKINIELTNRDV). Residues 171–191 (TTLLLFWLILLSLSILRVYKR) form a helical membrane-spanning segment. Residues 192–329 (STNLWAICFT…NKHINNLTLA (138 aa)) are Cytoplasmic-facing. A helical transmembrane segment spans residues 330-350 (LFESFKTYLLIGMLWVLVNSI). Positions 338 to 632 (LLIGMLWVLV…LSNMLSFINQ (295 aa)) constitute an ABC transmembrane type-1 1 domain. Residues 351–379 (VNLLPTILMKRFLEIVDNPNRSSSCMNLA) are Vacuolar-facing. Asparagine 370 carries an N-linked (GlcNAc...) asparagine glycan. Residues 380 to 400 (WLYIIGMFICRLTLAICNSQG) traverse the membrane as a helical segment. The Cytoplasmic portion of the chain corresponds to 401–465 (QFVSDKICLR…SFKVSELANY (65 aa)). The chain crosses the membrane as a helical span at residues 466–486 (LYVTVQAVIMIIVVVGLLFNF). At 487 to 489 (LGV) the chain is on the vacuolar side. Residues 490–510 (SAFAGISIILVMFPLNFLLAN) traverse the membrane as a helical segment. At 511-572 (LLGKFQKQTL…SLLKKSLVWS (62 aa)) the chain is on the cytoplasmic side. A helical membrane pass occupies residues 573–593 (VTSFLWFVTPTLVTGVTFAIC). At 594 to 614 (TFVQHEDLNAPLAFTTLSLFT) the chain is on the vacuolar side. A helical transmembrane segment spans residues 615-635 (LLKTPLDQLSNMLSFINQSKV). The Cytoplasmic segment spans residues 636-989 (SLKRISDFLR…ALTALFALYI (354 aa)). The ABC transporter 1 domain maps to 664–908 (IEFKNATLTW…GLFKEKYVQL (245 aa)). Position 702–709 (702–709 (GSTGSGKS)) interacts with ATP. The ABC transmembrane type-1 2 domain occupies 981-1282 (LTALFALYIT…LVRLYSTFEM (302 aa)). Residues 990 to 1010 (TAQILFISQSWWIRHWVNDTN) form a helical membrane-spanning segment. Topologically, residues 1011–1051 (VRINAPGFAMDTLPLKGMTDSSKNKHNAFYYLTVYFLIGII) are vacuolar. The helical transmembrane segment at 1052–1072 (QAMLGGFKTMMTFLSGMRASR) threads the bilayer. Topologically, residues 1073–1115 (KIFNNLLDLVLHAQIRFFDVTPVGRIMNRFSKDIEGVDQELIP) are cytoplasmic. A helical membrane pass occupies residues 1116-1136 (YLEVTIFCLIQCASIIFLITV). Residue isoleucine 1137 is a topological domain, vacuolar. The chain crosses the membrane as a helical span at residues 1138 to 1158 (TPRFLTVAVIVFVLYFFVGKW). The Cytoplasmic segment spans residues 1159–1229 (YLTASRELKR…VTVKWFSFRV (71 aa)). Residues 1230–1250 (DMIGAFIVLASGSFILLNIAN) form a helical membrane-spanning segment. Residues 1251 to 1252 (ID) are Vacuolar-facing. Residues 1253–1273 (SGLAGISLTYAILFTDGALWL) traverse the membrane as a helical segment. The Cytoplasmic portion of the chain corresponds to 1274–1592 (VRLYSTFEMN…IAKQSSKMMK (319 aa)). Positions 1323–1572 (IEIENLSLRY…ERGIFYSMCR (250 aa)) constitute an ABC transporter 2 domain. Position 1357–1364 (1357–1364 (GRTGAGKS)) interacts with ATP.

Belongs to the ABC transporter superfamily. ABC transporter which may be involved in multidrug resistance.

Its subcellular location is the vacuole membrane. The protein is ABC transporter ATP-binding protein/permease VMR1 (VMR1) of Saccharomyces cerevisiae (strain ATCC 204508 / S288c) (Baker's yeast).